Consider the following 299-residue polypeptide: Diphthine methyl ester synthase 1 (299 aa).

S-adenosyl-L-methionine is bound by residues L9, D85, G88, 113 to 114 (SV), L164, L222, and H247.

The protein belongs to the diphthine synthase family.

It is found in the cytoplasm. It carries out the reaction 2-[(3S)-amino-3-carboxypropyl]-L-histidyl-[translation elongation factor 2] + 4 S-adenosyl-L-methionine = diphthine methyl ester-[translation elongation factor 2] + 4 S-adenosyl-L-homocysteine + 3 H(+). It functions in the pathway protein modification; peptidyl-diphthamide biosynthesis. Its function is as follows. S-adenosyl-L-methionine-dependent methyltransferase that catalyzes four methylations of the modified target histidine residue in translation elongation factor 2 (EF-2), to form an intermediate called diphthine methyl ester. The four successive methylation reactions represent the second step of diphthamide biosynthesis. In Candida albicans (strain SC5314 / ATCC MYA-2876) (Yeast), this protein is Diphthine methyl ester synthase 1 (DPH5).